The chain runs to 331 residues: Biotin synthase (331 aa).

Positions 40 to 269 constitute a Radical SAM core domain; sequence YRVQLASLLS…HARVRLSAGR (230 aa). [4Fe-4S] cluster-binding residues include C55, C59, and C62. C100, C132, C192, and R264 together coordinate [2Fe-2S] cluster.

This sequence belongs to the radical SAM superfamily. Biotin synthase family. As to quaternary structure, homodimer. [4Fe-4S] cluster is required as a cofactor. It depends on [2Fe-2S] cluster as a cofactor.

It catalyses the reaction (4R,5S)-dethiobiotin + (sulfur carrier)-SH + 2 reduced [2Fe-2S]-[ferredoxin] + 2 S-adenosyl-L-methionine = (sulfur carrier)-H + biotin + 2 5'-deoxyadenosine + 2 L-methionine + 2 oxidized [2Fe-2S]-[ferredoxin]. It functions in the pathway cofactor biosynthesis; biotin biosynthesis; biotin from 7,8-diaminononanoate: step 2/2. Functionally, catalyzes the conversion of dethiobiotin (DTB) to biotin by the insertion of a sulfur atom into dethiobiotin via a radical-based mechanism. This is Biotin synthase from Synechococcus sp. (strain CC9605).